The sequence spans 159 residues: NADH-quinone oxidoreductase subunit B (159 aa).

Positions 37, 38, 102, and 132 each coordinate [4Fe-4S] cluster.

Belongs to the complex I 20 kDa subunit family. NDH-1 is composed of 14 different subunits. Subunits NuoB, C, D, E, F, and G constitute the peripheral sector of the complex. The cofactor is [4Fe-4S] cluster.

Its subcellular location is the cell inner membrane. The enzyme catalyses a quinone + NADH + 5 H(+)(in) = a quinol + NAD(+) + 4 H(+)(out). Functionally, NDH-1 shuttles electrons from NADH, via FMN and iron-sulfur (Fe-S) centers, to quinones in the respiratory chain. Couples the redox reaction to proton translocation (for every two electrons transferred, four hydrogen ions are translocated across the cytoplasmic membrane), and thus conserves the redox energy in a proton gradient. This Polaromonas naphthalenivorans (strain CJ2) protein is NADH-quinone oxidoreductase subunit B.